We begin with the raw amino-acid sequence, 409 residues long: Gamma-glutamyl phosphate reductase (409 aa).

Belongs to the gamma-glutamyl phosphate reductase family.

It is found in the cytoplasm. The enzyme catalyses L-glutamate 5-semialdehyde + phosphate + NADP(+) = L-glutamyl 5-phosphate + NADPH + H(+). It functions in the pathway amino-acid biosynthesis; L-proline biosynthesis; L-glutamate 5-semialdehyde from L-glutamate: step 2/2. Functionally, catalyzes the NADPH-dependent reduction of L-glutamate 5-phosphate into L-glutamate 5-semialdehyde and phosphate. The product spontaneously undergoes cyclization to form 1-pyrroline-5-carboxylate. The chain is Gamma-glutamyl phosphate reductase from Mycobacterium leprae (strain TN).